A 464-amino-acid chain; its full sequence is 26S proteasome regulatory subunit 7 homolog B (464 aa).

246–253 (GPPGSGKT) is a binding site for ATP. Residue Lys452 forms a Glycyl lysine isopeptide (Lys-Gly) (interchain with G-Cter in ubiquitin) linkage.

This sequence belongs to the AAA ATPase family. Component of the 19S regulatory particle (RP/PA700) base subcomplex of the 26S proteasome. The 26S proteasome is composed of a core protease (CP), known as the 20S proteasome, capped at one or both ends by the 19S regulatory particle (RP/PA700). The RP/PA700 complex is composed of at least 17 different subunits in two subcomplexes, the base and the lid, which form the portions proximal and distal to the 20S proteolytic core, respectively.

It localises to the cytoplasm. It is found in the nucleus. The 26S proteasome is involved in the ATP-dependent degradation of ubiquitinated proteins. The regulatory (or ATPase) complex confers ATP dependency and substrate specificity to the 26S complex. This chain is 26S proteasome regulatory subunit 7 homolog B (RPT1B), found in Arabidopsis thaliana (Mouse-ear cress).